The following is a 472-amino-acid chain: Methanethiol oxidase (472 aa).

This sequence belongs to the selenium-binding protein family.

It is found in the nucleus. Its subcellular location is the cytoplasm. The protein localises to the cytosol. The protein resides in the membrane. The enzyme catalyses methanethiol + O2 + H2O = hydrogen sulfide + formaldehyde + H2O2 + H(+). Its pathway is organosulfur degradation. Its function is as follows. Catalyzes the oxidation of methanethiol, an organosulfur compound known to be produced in substantial amounts by gut bacteria. Selenium-binding protein which may be involved in the sensing of reactive xenobiotics in the cytoplasm. May be involved in intra-Golgi protein transport. The polypeptide is Methanethiol oxidase (selenbp1-b) (Xenopus laevis (African clawed frog)).